The chain runs to 126 residues: Histone H2B 8 (126 aa).

Over residues 1–12 the composition is skewed to low complexity; sequence MPEPAKSAPAPK. A disordered region spans residues 1–35; that stretch reads MPEPAKSAPAPKKGSKKAVTKTQKKGDKKRRKTRK. N6-acetyllysine is present on residues Lys-6 and Lys-13. Positions 13-34 are enriched in basic residues; the sequence is KGSKKAVTKTQKKGDKKRRKTR. Residue Ser-15 is modified to Phosphoserine. 2 positions are modified to N6-acetyllysine: Lys-16 and Lys-21. Ser-113 carries an O-linked (GlcNAc) serine glycan. Lys-121 is covalently cross-linked (Glycyl lysine isopeptide (Lys-Gly) (interchain with G-Cter in ubiquitin)).

Belongs to the histone H2B family. In terms of assembly, the nucleosome is a histone octamer containing two molecules each of H2A, H2B, H3 and H4 assembled in one H3-H4 heterotetramer and two H2A-H2B heterodimers. The octamer wraps approximately 147 bp of DNA. Post-translationally, monoubiquitination of Lys-121 by the BRE1 gives a specific tag for epigenetic transcriptional activation and is also prerequisite for histone H3 'Lys-4' and 'Lys-79' methylation. Phosphorylated on Ser-15 during apoptosis; which facilitates apoptotic chromatin condensation. In terms of processing, glcNAcylation at Ser-113 promotes monoubiquitination of Lys-121. It fluctuates in response to extracellular glucose, and associates with transcribed genes.

It localises to the nucleus. It is found in the chromosome. Core component of nucleosome. Nucleosomes wrap and compact DNA into chromatin, limiting DNA accessibility to the cellular machineries which require DNA as a template. Histones thereby play a central role in transcription regulation, DNA repair, DNA replication and chromosomal stability. DNA accessibility is regulated via a complex set of post-translational modifications of histones, also called histone code, and nucleosome remodeling. This Gallus gallus (Chicken) protein is Histone H2B 8 (H2B-VIII).